We begin with the raw amino-acid sequence, 332 residues long: Ketol-acid reductoisomerase (NADP(+)) (332 aa).

The KARI N-terminal Rossmann domain maps to 1 to 182 (MAQVWKDAEI…GSARAGLIKT (182 aa)). Residues 25–28 (YGIQ), lysine 48, serine 53, and 83–86 (DMIQ) contribute to the NADP(+) site. Histidine 108 is an active-site residue. Glycine 134 lines the NADP(+) pocket. The KARI C-terminal knotted domain maps to 183–329 (TFKEEVETDW…RKMRKMMWPD (147 aa)). Mg(2+)-binding residues include aspartate 191, glutamate 195, glutamate 227, and glutamate 231. Serine 252 is a binding site for substrate.

It belongs to the ketol-acid reductoisomerase family. Mg(2+) is required as a cofactor.

It catalyses the reaction (2R)-2,3-dihydroxy-3-methylbutanoate + NADP(+) = (2S)-2-acetolactate + NADPH + H(+). The enzyme catalyses (2R,3R)-2,3-dihydroxy-3-methylpentanoate + NADP(+) = (S)-2-ethyl-2-hydroxy-3-oxobutanoate + NADPH + H(+). The protein operates within amino-acid biosynthesis; L-isoleucine biosynthesis; L-isoleucine from 2-oxobutanoate: step 2/4. It participates in amino-acid biosynthesis; L-valine biosynthesis; L-valine from pyruvate: step 2/4. In terms of biological role, involved in the biosynthesis of branched-chain amino acids (BCAA). Catalyzes an alkyl-migration followed by a ketol-acid reduction of (S)-2-acetolactate (S2AL) to yield (R)-2,3-dihydroxy-isovalerate. In the isomerase reaction, S2AL is rearranged via a Mg-dependent methyl migration to produce 3-hydroxy-3-methyl-2-ketobutyrate (HMKB). In the reductase reaction, this 2-ketoacid undergoes a metal-dependent reduction by NADPH to yield (R)-2,3-dihydroxy-isovalerate. The sequence is that of Ketol-acid reductoisomerase (NADP(+)) from Cenarchaeum symbiosum (strain A).